Consider the following 122-residue polypeptide: MSFKVKNQSKHLYSLMTKFKRSQLILKHQSNNFASELWNEEDIIRSKQFIELIEDTLLHLKKDTVDFIYDIFIYGKKPCDISYSNSTYYKKLNKAANSFFDHFVWEAPIYKTKELKNDNSHS.

This is an uncharacterized protein from Mycoplasma pneumoniae (strain ATCC 29342 / M129 / Subtype 1) (Mycoplasmoides pneumoniae).